We begin with the raw amino-acid sequence, 197 residues long: Phosphoheptose isomerase (197 aa).

One can recognise an SIS domain in the interval 36–197 (LVHSLAQGGK…VDSLLLGVEE (162 aa)). 51–53 (NGG) contributes to the substrate binding site. Positions 60 and 64 each coordinate Zn(2+). Substrate-binding positions include Glu64, 93–94 (ND), 119–121 (STS), Ser124, and Gln174. The Zn(2+) site is built by Gln174 and His182.

This sequence belongs to the SIS family. GmhA subfamily. As to quaternary structure, homotetramer. Zn(2+) serves as cofactor.

The protein resides in the cytoplasm. The enzyme catalyses 2 D-sedoheptulose 7-phosphate = D-glycero-alpha-D-manno-heptose 7-phosphate + D-glycero-beta-D-manno-heptose 7-phosphate. Its pathway is carbohydrate biosynthesis; D-glycero-D-manno-heptose 7-phosphate biosynthesis; D-glycero-alpha-D-manno-heptose 7-phosphate and D-glycero-beta-D-manno-heptose 7-phosphate from sedoheptulose 7-phosphate: step 1/1. Catalyzes the isomerization of sedoheptulose 7-phosphate in D-glycero-D-manno-heptose 7-phosphate. The polypeptide is Phosphoheptose isomerase (Thiobacillus denitrificans (strain ATCC 25259 / T1)).